The sequence spans 278 residues: MKLKFTKMQGLGNDFAVLDGVRQTIRLTPEQIRKLGDRRFGIGFDQLLLVEPPQDAGNDFSYRIFNCDGGEVEQCGNGARCFARFVFDHGLTDRREIRVETARGVIVPRLADDGLVTVDMGPPRFRPADIPFVAAEDAVIHELEVAGQILGVTVVSMGNPHAVQVVDDVDTAPVTAFGPLIENHLRFPARVNAGFMQIESRTAICLRVFERGSGETLACGTGACAAVVAGIRRGLLDADTPVTVQTRGGELRIRWAGDGHPVWMTGPAVTVFEGEITL.

Residues Asn-13, Gln-46, and Asn-66 each coordinate substrate. The active-site Proton donor is Cys-75. Residues Gly-76–Asn-77, Asn-159, Asn-192, and Glu-210–Arg-211 contribute to the substrate site. The active-site Proton acceptor is Cys-219. Position 220–221 (Gly-220–Thr-221) interacts with substrate.

Belongs to the diaminopimelate epimerase family. In terms of assembly, homodimer.

The protein resides in the cytoplasm. The enzyme catalyses (2S,6S)-2,6-diaminopimelate = meso-2,6-diaminopimelate. The protein operates within amino-acid biosynthesis; L-lysine biosynthesis via DAP pathway; DL-2,6-diaminopimelate from LL-2,6-diaminopimelate: step 1/1. Functionally, catalyzes the stereoinversion of LL-2,6-diaminopimelate (L,L-DAP) to meso-diaminopimelate (meso-DAP), a precursor of L-lysine and an essential component of the bacterial peptidoglycan. In Laribacter hongkongensis (strain HLHK9), this protein is Diaminopimelate epimerase.